Here is a 684-residue protein sequence, read N- to C-terminus: Beta-taxilin (684 aa).

Residues 1-26 (MEANHSEQLSAERQSTPPGDSSSLPS) are compositionally biased toward polar residues. A disordered region spans residues 1-132 (MEANHSEQLS…KEPVSNKEQK (132 aa)). Residues 45–64 (PEKEASVHPDISEELNRQLE) show a composition bias toward basic and acidic residues. Positions 93–107 (ESPDNEDGDCEETTE) are enriched in acidic residues. 2 coiled-coil regions span residues 135-351 (KKIL…VLKE) and 378-467 (NEVF…SEKD). Over residues 458–475 (IRDAEISEKDDQSQHNSD) the composition is skewed to basic and acidic residues. 3 disordered regions span residues 458 to 485 (IRDAEISEKDDQSQHNSDEEPESNVSVD), 514 to 632 (ESTP…DVPA), and 646 to 684 (PACEPSRQPPRAAAEELPVGASAGPQPRNVADTNLEGVD). Residues Ser-474 and Ser-483 each carry the phosphoserine modification. A compositionally biased stretch (basic and acidic residues) spans 514 to 524 (ESTPHQSKETQ). Over residues 613 to 622 (QAPQAPTEAS) the composition is skewed to polar residues.

The protein belongs to the taxilin family. As to quaternary structure, binds to the C-terminal coiled coil region of syntaxin family members STX1A, STX3A and STX4A. Has a preference for STX1A. As to expression, expressed in skeletal muscle.

Its function is as follows. Promotes motor nerve regeneration. May be involved in intracellular vesicle traffic. The chain is Beta-taxilin (TXLNB) from Homo sapiens (Human).